The sequence spans 342 residues: Holliday junction branch migration complex subunit RuvB (342 aa).

Residues Met-1 to Gln-22 are disordered. Residues Met-1–Tyr-185 form a large ATPase domain (RuvB-L) region. ATP-binding positions include Leu-24, Arg-25, Gly-66, Lys-69, Thr-70, Ser-71, Glu-132–Tyr-134, Arg-175, Tyr-185, and Arg-222. Residue Thr-70 participates in Mg(2+) binding. The interval Glu-186–Glu-256 is small ATPAse domain (RuvB-S). The head domain (RuvB-H) stretch occupies residues Gly-259–Ile-342. DNA-binding residues include Arg-295, Arg-314, and Arg-319.

It belongs to the RuvB family. Homohexamer. Forms an RuvA(8)-RuvB(12)-Holliday junction (HJ) complex. HJ DNA is sandwiched between 2 RuvA tetramers; dsDNA enters through RuvA and exits via RuvB. An RuvB hexamer assembles on each DNA strand where it exits the tetramer. Each RuvB hexamer is contacted by two RuvA subunits (via domain III) on 2 adjacent RuvB subunits; this complex drives branch migration. In the full resolvosome a probable DNA-RuvA(4)-RuvB(12)-RuvC(2) complex forms which resolves the HJ.

The protein resides in the cytoplasm. It carries out the reaction ATP + H2O = ADP + phosphate + H(+). Its function is as follows. The RuvA-RuvB-RuvC complex processes Holliday junction (HJ) DNA during genetic recombination and DNA repair, while the RuvA-RuvB complex plays an important role in the rescue of blocked DNA replication forks via replication fork reversal (RFR). RuvA specifically binds to HJ cruciform DNA, conferring on it an open structure. The RuvB hexamer acts as an ATP-dependent pump, pulling dsDNA into and through the RuvAB complex. RuvB forms 2 homohexamers on either side of HJ DNA bound by 1 or 2 RuvA tetramers; 4 subunits per hexamer contact DNA at a time. Coordinated motions by a converter formed by DNA-disengaged RuvB subunits stimulates ATP hydrolysis and nucleotide exchange. Immobilization of the converter enables RuvB to convert the ATP-contained energy into a lever motion, pulling 2 nucleotides of DNA out of the RuvA tetramer per ATP hydrolyzed, thus driving DNA branch migration. The RuvB motors rotate together with the DNA substrate, which together with the progressing nucleotide cycle form the mechanistic basis for DNA recombination by continuous HJ branch migration. Branch migration allows RuvC to scan DNA until it finds its consensus sequence, where it cleaves and resolves cruciform DNA. This Anaeromyxobacter sp. (strain Fw109-5) protein is Holliday junction branch migration complex subunit RuvB.